Here is a 243-residue protein sequence, read N- to C-terminus: Ribonuclease PH (243 aa).

Residues Arg91 and 129 to 131 (GTR) each bind phosphate.

Belongs to the RNase PH family. As to quaternary structure, homohexameric ring arranged as a trimer of dimers.

The enzyme catalyses tRNA(n+1) + phosphate = tRNA(n) + a ribonucleoside 5'-diphosphate. Functionally, phosphorolytic 3'-5' exoribonuclease that plays an important role in tRNA 3'-end maturation. Removes nucleotide residues following the 3'-CCA terminus of tRNAs; can also add nucleotides to the ends of RNA molecules by using nucleoside diphosphates as substrates, but this may not be physiologically important. Probably plays a role in initiation of 16S rRNA degradation (leading to ribosome degradation) during starvation. This chain is Ribonuclease PH, found in Burkholderia mallei (strain NCTC 10247).